The primary structure comprises 147 residues: Large ribosomal subunit protein uL11 (147 aa).

The protein belongs to the universal ribosomal protein uL11 family. Part of the ribosomal stalk of the 50S ribosomal subunit. Interacts with L10 and the large rRNA to form the base of the stalk. L10 forms an elongated spine to which L12 dimers bind in a sequential fashion forming a multimeric L10(L12)X complex. Post-translationally, one or more lysine residues are methylated.

Forms part of the ribosomal stalk which helps the ribosome interact with GTP-bound translation factors. In Cytophaga hutchinsonii (strain ATCC 33406 / DSM 1761 / CIP 103989 / NBRC 15051 / NCIMB 9469 / D465), this protein is Large ribosomal subunit protein uL11.